A 161-amino-acid polypeptide reads, in one-letter code: V-type proton ATPase 16 kDa proteolipid subunit c 2 (161 aa).

Over 1–15 (MSYDLETAERAAYAP) the chain is Lumenal. The helical transmembrane segment at 16 to 36 (FFGYMGAASAQIFTVLGAAYG) threads the bilayer. The Cytoplasmic portion of the chain corresponds to 37–58 (TAKSAVGICSMGVMRPELIMKS). Residues 59–79 (VIPVIMAGIIGIYGLVVAMVL) traverse the membrane as a helical segment. Residues 80–98 (KGKVTSASAGYDLNKGFAH) are Lumenal-facing. Residues 99-119 (LAAGLTCGLCGLGAGYAIGIV) form a helical membrane-spanning segment. At 120-137 (GDAGVRGTAQQPRLFVGM) the chain is on the cytoplasmic side. Residues 138-158 (ILILIFSEVLGLYGMIVALIL) traverse the membrane as a helical segment. The Lumenal portion of the chain corresponds to 159 to 161 (GTS).

This sequence belongs to the V-ATPase proteolipid subunit family. As to quaternary structure, V-ATPase is a heteromultimeric enzyme made up of two complexes: the ATP-hydrolytic V1 complex and the proton translocation V0 complex. The V1 complex consists of three catalytic AB heterodimers that form a heterohexamer, three peripheral stalks each consisting of EG heterodimers, one central rotor including subunits D and F, and the regulatory subunits C and H. The proton translocation complex V0 consists of the proton transport subunit a, a ring of proteolipid subunits c9c'', rotary subunit d, subunits e and f, and the accessory subunits vah-19/Ac45 and vah-20/PRR. As to expression, expressed in the H-shaped excretory cell, rectum, and a pair of cells posterior to the anus.

The protein localises to the membrane. In terms of biological role, proton-conducting pore forming subunit of the V0 complex of vacuolar(H+)-ATPase (V-ATPase), a multisubunit enzyme composed of a peripheral complex (V1) that hydrolyzes ATP and a membrane integral complex (V0) that translocates protons. V-ATPase is responsible for acidifying and maintaining the pH of intracellular compartments and in some cell types, is targeted to the plasma membrane, where it is responsible for acidifying the extracellular environment. Involved in necrotic cell death. Required along with other vacuolar ATPase components for the removal of protein aggregates which form in immature oocytes in the distal gonad. This removal occurs as the oocytes mature and move to the proximal gonad, is triggered by the introduction of sperm through mating and occurs before fertilization. The introduction of sperm triggers V-ATPase accumulation in proximal oocytes and induces lysosomal acidification which leads to engulfing of protein aggregates by lysosomes and subsequent clearance of the aggregates. Lysosomal acidification also leads to changes in mitochondrial morphology and function. Mitochondria in distal immature oocytes are fragmented, produce high levels of reactive oxygen species (ROS) and have high membrane potential, indicative of metabolic inactivity. In contrast, mitochondria in proximal mature oocytes are tubular with lower ROS levels and membrane potential, indicative of an active metabolic state required for aggregate mobilization before clearance. The sequence is that of V-type proton ATPase 16 kDa proteolipid subunit c 2 from Caenorhabditis elegans.